The primary structure comprises 268 residues: Tryptophan synthase alpha chain (268 aa).

Catalysis depends on proton acceptor residues Glu-49 and Asp-60.

This sequence belongs to the TrpA family. Tetramer of two alpha and two beta chains.

The enzyme catalyses (1S,2R)-1-C-(indol-3-yl)glycerol 3-phosphate + L-serine = D-glyceraldehyde 3-phosphate + L-tryptophan + H2O. Its pathway is amino-acid biosynthesis; L-tryptophan biosynthesis; L-tryptophan from chorismate: step 5/5. The alpha subunit is responsible for the aldol cleavage of indoleglycerol phosphate to indole and glyceraldehyde 3-phosphate. The chain is Tryptophan synthase alpha chain from Pectobacterium atrosepticum (strain SCRI 1043 / ATCC BAA-672) (Erwinia carotovora subsp. atroseptica).